A 416-amino-acid chain; its full sequence is uncharacterized protein (416 aa).

4 residues coordinate [4Fe-4S] cluster: C63, C75, C78, and C152. The S-adenosyl-L-methionine site is built by Q253, F280, E300, and D348. The active-site Nucleophile is the C374.

This sequence belongs to the class I-like SAM-binding methyltransferase superfamily. RNA M5U methyltransferase family.

This is an uncharacterized protein from Agrobacterium fabrum (strain C58 / ATCC 33970) (Agrobacterium tumefaciens (strain C58)).